A 347-amino-acid polypeptide reads, in one-letter code: Anthranilate phosphoribosyltransferase (347 aa).

Residues Gly88, 91–92 (GD), Thr96, 98–101 (NIST), 116–124 (KHGNRAASS), and Ser128 contribute to the 5-phospho-alpha-D-ribose 1-diphosphate site. Residue Gly88 participates in anthranilate binding. Ser100 is a binding site for Mg(2+). Residue Asn119 participates in anthranilate binding. Arg174 is a binding site for anthranilate. Residues Asp233 and Glu234 each contribute to the Mg(2+) site.

It belongs to the anthranilate phosphoribosyltransferase family. As to quaternary structure, homodimer. The cofactor is Mg(2+).

The catalysed reaction is N-(5-phospho-beta-D-ribosyl)anthranilate + diphosphate = 5-phospho-alpha-D-ribose 1-diphosphate + anthranilate. Its pathway is amino-acid biosynthesis; L-tryptophan biosynthesis; L-tryptophan from chorismate: step 2/5. Functionally, catalyzes the transfer of the phosphoribosyl group of 5-phosphorylribose-1-pyrophosphate (PRPP) to anthranilate to yield N-(5'-phosphoribosyl)-anthranilate (PRA). In Rhodospirillum rubrum (strain ATCC 11170 / ATH 1.1.1 / DSM 467 / LMG 4362 / NCIMB 8255 / S1), this protein is Anthranilate phosphoribosyltransferase.